The chain runs to 327 residues: AA9 family lytic polysaccharide monooxygenase B (327 aa).

A signal peptide spans 1–19 (MKSFTATALAALLAQQAAA). Cu(2+) is bound by residues histidine 20 and histidine 98. The cysteines at positions 68 and 192 are disulfide-linked. Residues histidine 178 and glutamine 187 each contribute to the O2 site. Tyrosine 189 is a Cu(2+) binding site. Residues 264 to 280 (SPTTSLTPPVSTSTPAP) show a composition bias toward low complexity. The segment at 264–284 (SPTTSLTPPVSTSTPAPGNGG) is disordered. A CBM1 domain is found at 291–327 (CTVQKYGQCGGQGYTGCTTCAAGSTCNTTNQWYHQCV). N-linked (GlcNAc...) asparagine glycosylation occurs at asparagine 317.

Belongs to the polysaccharide monooxygenase AA9 family. Cu(2+) serves as cofactor.

Its subcellular location is the secreted. It carries out the reaction [(1-&gt;4)-beta-D-glucosyl]n+m + reduced acceptor + O2 = 4-dehydro-beta-D-glucosyl-[(1-&gt;4)-beta-D-glucosyl]n-1 + [(1-&gt;4)-beta-D-glucosyl]m + acceptor + H2O.. Functionally, lytic polysaccharide monooxygenase (LPMO) that depolymerizes crystalline and amorphous polysaccharides via the oxidation of scissile alpha- or beta-(1-4)-glycosidic bonds, yielding C1 or C4 oxidation products. Catalysis by LPMOs requires the reduction of the active-site copper from Cu(II) to Cu(I) by a reducing agent and H(2)O(2) or O(2) as a cosubstrate. This is AA9 family lytic polysaccharide monooxygenase B (LPMO9B) from Podospora anserina (strain S / ATCC MYA-4624 / DSM 980 / FGSC 10383) (Pleurage anserina).